The sequence spans 270 residues: Putative carboxymethylenebutenolidase (270 aa).

Active-site residues include Cys-147, Asp-204, and His-236.

It belongs to the dienelactone hydrolase family.

It carries out the reaction 2-(5-oxo-2,5-dihydrofuran-2-ylidene)acetate + H2O = 4-oxohex-2-enedioate + H(+). In Salmonella typhimurium (strain LT2 / SGSC1412 / ATCC 700720), this protein is Putative carboxymethylenebutenolidase (ysgA).